Reading from the N-terminus, the 206-residue chain is uncharacterized protein (206 aa).

Positions 1-17 are cleaved as a signal peptide; the sequence is MKGKILFALFLSAGVIA. Cys-18 is lipidated: N-palmitoyl cysteine. Cys-18 carries the S-diacylglycerol cysteine lipid modification. The stretch at 21 to 58 forms a coiled coil; that stretch reads ASQAAKQQEVKVAKAETKTKKKESKAEKFRKALAAQDK. The Cytochrome c domain occupies 97–201; the sequence is GDWRKGESLA…DIVAYLHDPE (105 aa). Residues Cys-127, Cys-130, and His-131 each coordinate heme c.

It is found in the cell membrane. This is an uncharacterized protein from Aquifex aeolicus (strain VF5).